Consider the following 154-residue polypeptide: Large ribosomal subunit protein uL15 (154 aa).

The segment at M1–V44 is disordered. Residues R21–V35 are compositionally biased toward gly residues.

This sequence belongs to the universal ribosomal protein uL15 family. Part of the 50S ribosomal subunit.

Functionally, binds to the 23S rRNA. In Bartonella quintana (strain Toulouse) (Rochalimaea quintana), this protein is Large ribosomal subunit protein uL15.